Reading from the N-terminus, the 89-residue chain is Cell division topological specificity factor (89 aa).

It belongs to the MinE family.

In terms of biological role, prevents the cell division inhibition by proteins MinC and MinD at internal division sites while permitting inhibition at polar sites. This ensures cell division at the proper site by restricting the formation of a division septum at the midpoint of the long axis of the cell. This Heliobacterium modesticaldum (strain ATCC 51547 / Ice1) protein is Cell division topological specificity factor.